The sequence spans 316 residues: Erythritol catabolism regulatory protein EryD (316 aa).

Positions 23 to 42 form a DNA-binding region, H-T-H motif; sequence QSAVAKRLGLPSVKAHRLIA.

This sequence belongs to the SorC transcriptional regulatory family.

Erythritol may act as an inducer, probably by binding to EryD and inhibiting its repressor activity. Its function is as follows. Represses the expression of the eryABCD operon, which is involved in erythritol catabolism. This chain is Erythritol catabolism regulatory protein EryD, found in Brucella abortus (strain 2308).